We begin with the raw amino-acid sequence, 431 residues long: Adenylosuccinate synthetase (431 aa).

GTP-binding positions include 13–19 (GDEGKGK) and 41–43 (GHT). The Proton acceptor role is filled by aspartate 14. The Mg(2+) site is built by aspartate 14 and glycine 41. Residues 14–17 (DEGK), 39–42 (NAGH), threonine 130, arginine 144, glutamine 225, threonine 240, and arginine 304 contribute to the IMP site. Catalysis depends on histidine 42, which acts as the Proton donor. 300–306 (ATTGRKR) serves as a coordination point for substrate. GTP-binding positions include arginine 306, 332–334 (KLD), and 415–417 (STG).

The protein belongs to the adenylosuccinate synthetase family. As to quaternary structure, homodimer. The cofactor is Mg(2+).

The protein localises to the cytoplasm. It carries out the reaction IMP + L-aspartate + GTP = N(6)-(1,2-dicarboxyethyl)-AMP + GDP + phosphate + 2 H(+). Its pathway is purine metabolism; AMP biosynthesis via de novo pathway; AMP from IMP: step 1/2. Plays an important role in the de novo pathway of purine nucleotide biosynthesis. Catalyzes the first committed step in the biosynthesis of AMP from IMP. The polypeptide is Adenylosuccinate synthetase (Shewanella halifaxensis (strain HAW-EB4)).